The primary structure comprises 261 residues: G patch domain-containing protein 11 (261 aa).

3 disordered regions span residues Met1–Ala67, Ala88–Asn124, and Glu184–Glu213. Composition is skewed to basic and acidic residues over residues Arg29–Leu64 and Ile111–Asn124. Residues Lys31–Asn65 adopt a coiled-coil conformation. One can recognise a G-patch domain in the interval Asn70–Met116. Residues Lys190–Gln222 adopt a coiled-coil conformation. The segment covering Gln194–Glu213 has biased composition (acidic residues).

This sequence belongs to the GPATCH11 family.

It is found in the chromosome. The protein localises to the centromere. Its subcellular location is the kinetochore. This is G patch domain-containing protein 11 (gpatch11) from Xenopus tropicalis (Western clawed frog).